Here is a 313-residue protein sequence, read N- to C-terminus: Olfactory receptor 51A4 (313 aa).

The Extracellular portion of the chain corresponds to 1–27 (MSIINTSYVEITTFFLVGMPGLEYAHI). N-linked (GlcNAc...) asparagine glycosylation occurs at asparagine 5. Residues 28–48 (WISIPICSMYLIAILGNGTIL) form a helical membrane-spanning segment. The Cytoplasmic segment spans residues 49–56 (FIIKTEPS). The chain crosses the membrane as a helical span at residues 57–77 (LHEPMYYFLSMLAMSDLGLSL). Over 78–101 (SSLPTVLSIFLFNAPEISSNACFA) the chain is Extracellular. The cysteines at positions 99 and 191 are disulfide-linked. A helical transmembrane segment spans residues 102–122 (QEFFIHGFSVLESSVLLIMSF). Residues 123-141 (DRFLAIHNPLRYTSILTTV) are Cytoplasmic-facing. The helical transmembrane segment at 142-162 (RVAQIGIVFSFKSMLLVLPFP) threads the bilayer. The Extracellular segment spans residues 163–198 (FTLRNLRYCKKNQLSHSYCLHQDVMKLACSDNRIDV). Residues 199-218 (IYGFFGALCLMVDFILIAVS) form a helical membrane-spanning segment. Residues 219 to 238 (YTLILKTVLGIASKKEQLKA) lie on the Cytoplasmic side of the membrane. A helical transmembrane segment spans residues 239-259 (LNTCVSHICAVIIFYLPIINL). Residues 260–274 (AVVHRFARHVSPLIN) are Extracellular-facing. The helical transmembrane segment at 275–295 (VLMANVLLLVPPLTNPIVYCV) threads the bilayer. Over 296–313 (KTKQIRVRVVAKLCQRKI) the chain is Cytoplasmic.

The protein belongs to the G-protein coupled receptor 1 family.

Its subcellular location is the cell membrane. Its function is as follows. Odorant receptor. The polypeptide is Olfactory receptor 51A4 (OR51A4) (Homo sapiens (Human)).